The chain runs to 148 residues: Large ribosomal subunit protein bL9 (148 aa).

The protein belongs to the bacterial ribosomal protein bL9 family.

Its function is as follows. Binds to the 23S rRNA. The polypeptide is Large ribosomal subunit protein bL9 (Lachnoclostridium phytofermentans (strain ATCC 700394 / DSM 18823 / ISDg) (Clostridium phytofermentans)).